We begin with the raw amino-acid sequence, 95 residues long: uncharacterized protein (95 aa).

This is an uncharacterized protein from Saccharomyces cerevisiae (strain ATCC 204508 / S288c) (Baker's yeast).